The primary structure comprises 140 residues: Gastrula zinc finger protein XlCGF49.1 (140 aa).

5 consecutive C2H2-type zinc fingers follow at residues 6–28, 34–56, 62–84, 90–112, and 118–140; these read FTCMECSKSFSQKSNLQTHYKIH, FTCMECGRTFSQKSTLLSHYKMH, FSCSECGKSFSHKNKLTLHQKIH, YACTECGKRFPEKSKLKIHWKIH, and FSCTECGKKFSRESNLYFHQKMH.

Belongs to the krueppel C2H2-type zinc-finger protein family.

Its subcellular location is the nucleus. May be involved in transcriptional regulation. The protein is Gastrula zinc finger protein XlCGF49.1 of Xenopus laevis (African clawed frog).